The sequence spans 101 residues: Ferredoxin Fdx2 (101 aa).

4Fe-4S ferredoxin-type domains are found at residues 1 to 29 (MATY…EGDE) and 31 to 64 (YVID…PNPQ). [4Fe-4S] cluster contacts are provided by Cys-9, Cys-12, Cys-15, Cys-19, Cys-38, Cys-41, Cys-50, and Cys-54.

Requires [4Fe-4S] cluster as cofactor.

Ferredoxins are iron-sulfur proteins that transfer electrons in a wide variety of metabolic reactions. Fdx2 can receive electrons from both FdR_A and FdR_B ferredoxin reductases, with a preference for FdR_B compared with FdR_A, and transfer the electrons to the cytochrome P450 CYP260A1. The protein is Ferredoxin Fdx2 of Sorangium cellulosum (strain So ce56) (Polyangium cellulosum (strain So ce56)).